The chain runs to 155 residues: Small ribosomal subunit protein uS7 (155 aa).

It belongs to the universal ribosomal protein uS7 family. As to quaternary structure, part of the 30S ribosomal subunit. Contacts proteins S9 and S11.

In terms of biological role, one of the primary rRNA binding proteins, it binds directly to 16S rRNA where it nucleates assembly of the head domain of the 30S subunit. Is located at the subunit interface close to the decoding center, probably blocks exit of the E-site tRNA. The polypeptide is Small ribosomal subunit protein uS7 (Corynebacterium glutamicum (strain R)).